A 284-amino-acid polypeptide reads, in one-letter code: Cell division protein DivIB (284 aa).

Residues 1–10 (MAWLRKKEQQ) are compositionally biased toward basic and acidic residues. The interval 1 to 38 (MAWLRKKEQQSDPLTPWQQYQARQQQTPRHDRRQKPKL) is disordered. Topologically, residues 1-56 (MAWLRKKEQQSDPLTPWQQYQARQQQTPRHDRRQKPKLDVNLPKIQTLRRRKLVKN) are cytoplasmic. A helical membrane pass occupies residues 57-77 (LVLILLPLLLLLGVFGYFASP). Over 78–284 (LSKVGLVSVQ…YSSSEKSSND (207 aa)) the chain is Extracellular. The POTRA domain occupies 79–150 (SKVGLVSVQG…NRIIIKTSEY (72 aa)).

This sequence belongs to the FtsQ/DivIB family. DivIB subfamily.

It localises to the cell membrane. Cell division protein that may be involved in stabilizing or promoting the assembly of the division complex. The chain is Cell division protein DivIB from Lacticaseibacillus rhamnosus (strain ATCC 53103 / LMG 18243 / GG) (Lactobacillus rhamnosus).